The sequence spans 209 residues: Guanylate kinase (209 aa).

In terms of domain architecture, Guanylate kinase-like spans Gly16 to Leu198. An ATP-binding site is contributed by Gly23–Ser30.

It belongs to the guanylate kinase family.

The protein resides in the cytoplasm. It catalyses the reaction GMP + ATP = GDP + ADP. Functionally, essential for recycling GMP and indirectly, cGMP. The chain is Guanylate kinase from Rhodopirellula baltica (strain DSM 10527 / NCIMB 13988 / SH1).